Consider the following 108-residue polypeptide: Large ribosomal subunit protein bL21 (108 aa).

This sequence belongs to the bacterial ribosomal protein bL21 family. In terms of assembly, part of the 50S ribosomal subunit. Contacts protein L20.

In terms of biological role, this protein binds to 23S rRNA in the presence of protein L20. The polypeptide is Large ribosomal subunit protein bL21 (Acidobacterium capsulatum (strain ATCC 51196 / DSM 11244 / BCRC 80197 / JCM 7670 / NBRC 15755 / NCIMB 13165 / 161)).